A 535-amino-acid polypeptide reads, in one-letter code: MRSSVSRQTYSTKGAFSSSSASGGGGSQARTSFSSVTVSRNSGRGGGPRCGPSMGGFGSQSLYNLGGSKSISVSVAGGASAGRVLGGFGLGGGAYMGLGACRPMLGPVCPPGGIQQVTVNQSLLTPLHVEIDPEIQRVRTEEREQIKTLNNKFASFIDKVRFLEQQNKVLETKWALLQEQGQKSGVTRNNLEPLFEHFINNLRGKLDNLQSERGRLDSELRNVQDLAEDFKTKYEDEINKRTAAENEFVVLKKDVDAAYVGRMDLHGMVDHLMGEIDFLRHLYEEELSQVQTHVSDTSVILSMDNNRNLDLDSIIAEVKAQYEQIAQRSRAEAESWYQTKYEELQVTAGKHGDNLRDTKNEIAELTRTVQRLQGEADAVKKQCQQLQTAIADAEQHGELALKDAQKKLGDLDAALNQAKEDLARLLRDYQALMNVKLALDVEIATYRKLLESEESRMSGECPSAVSISVTGNSTTVCGGGAAGFGGGISLGGGGGASKGRFSTNAGYSTVKGGPVSGGTSILRKTTTVKTSSRRY.

Polar residues-rich tracts occupy residues 1-12 (MRSSVSRQTYST) and 28-38 (QARTSFSSVTV). The segment at 1–53 (MRSSVSRQTYSTKGAFSSSSASGGGGSQARTSFSSVTVSRNSGRGGGPRCGPS) is disordered. Positions 1-141 (MRSSVSRQTY…DPEIQRVRTE (141 aa)) are head. Residues 43–53 (GRGGGPRCGPS) show a composition bias toward gly residues. The tract at residues 142–177 (EREQIKTLNNKFASFIDKVRFLEQQNKVLETKWALL) is coil 1A. One can recognise an IF rod domain in the interval 142–457 (EREQIKTLNN…KLLESEESRM (316 aa)). Residues 178-198 (QEQGQKSGVTRNNLEPLFEHF) are linker 1. Positions 199–290 (INNLRGKLDN…HLYEEELSQV (92 aa)) are coil 1B. Residues 291–314 (QTHVSDTSVILSMDNNRNLDLDSI) are linker 12. A coil 2 region spans residues 315-453 (IAEVKAQYEQ…ATYRKLLESE (139 aa)). The tail stretch occupies residues 454 to 535 (ESRMSGECPS…TTVKTSSRRY (82 aa)).

It belongs to the intermediate filament family. In terms of assembly, heterotetramer of two type I and two type II keratins.

In Bos taurus (Bovine), this protein is Keratin, type II cytoskeletal 79 (KRT79).